The primary structure comprises 87 residues: Cell division topological specificity factor (87 aa).

Belongs to the MinE family.

Its function is as follows. Prevents the cell division inhibition by proteins MinC and MinD at internal division sites while permitting inhibition at polar sites. This ensures cell division at the proper site by restricting the formation of a division septum at the midpoint of the long axis of the cell. This Blochmanniella pennsylvanica (strain BPEN) protein is Cell division topological specificity factor.